The sequence spans 395 residues: Elongation factor Tu (395 aa).

Residues 10-204 (KPHVNIGTIG…AVDSYIPTPE (195 aa)) form the tr-type G domain. The segment at 19-26 (GHVDHGKT) is G1. 19-26 (GHVDHGKT) is a binding site for GTP. Threonine 26 provides a ligand contact to Mg(2+). The segment at 60-64 (GITIS) is G2. Residues 81–84 (DCPG) form a G3 region. GTP contacts are provided by residues 81–85 (DCPGH) and 136–139 (NKCD). Residues 136–139 (NKCD) are G4. The tract at residues 174 to 176 (SAL) is G5.

It belongs to the TRAFAC class translation factor GTPase superfamily. Classic translation factor GTPase family. EF-Tu/EF-1A subfamily. As to quaternary structure, monomer.

The protein resides in the cytoplasm. The catalysed reaction is GTP + H2O = GDP + phosphate + H(+). GTP hydrolase that promotes the GTP-dependent binding of aminoacyl-tRNA to the A-site of ribosomes during protein biosynthesis. This Listeria monocytogenes serotype 4b (strain CLIP80459) protein is Elongation factor Tu.